Consider the following 198-residue polypeptide: Transcription antitermination protein NusB (198 aa).

This sequence belongs to the NusB family.

Its function is as follows. Involved in transcription antitermination. Required for transcription of ribosomal RNA (rRNA) genes. Binds specifically to the boxA antiterminator sequence of the ribosomal RNA (rrn) operons. This chain is Transcription antitermination protein NusB, found in Methylococcus capsulatus (strain ATCC 33009 / NCIMB 11132 / Bath).